We begin with the raw amino-acid sequence, 314 residues long: UDP-N-acetylenolpyruvoylglucosamine reductase (314 aa).

One can recognise an FAD-binding PCMH-type domain in the interval 31–208; the sequence is RIGGPADYYA…LSARFRLTPK (178 aa). Residue Arg-187 is part of the active site. The active-site Proton donor is Ser-237. Glu-307 is a catalytic residue.

It belongs to the MurB family. Requires FAD as cofactor.

It is found in the cytoplasm. The catalysed reaction is UDP-N-acetyl-alpha-D-muramate + NADP(+) = UDP-N-acetyl-3-O-(1-carboxyvinyl)-alpha-D-glucosamine + NADPH + H(+). Its pathway is cell wall biogenesis; peptidoglycan biosynthesis. Its function is as follows. Cell wall formation. The protein is UDP-N-acetylenolpyruvoylglucosamine reductase of Agathobacter rectalis (strain ATCC 33656 / DSM 3377 / JCM 17463 / KCTC 5835 / VPI 0990) (Eubacterium rectale).